The sequence spans 254 residues: Type III pantothenate kinase (254 aa).

Residue 6–13 (DVGNSNIV) participates in ATP binding. Substrate contacts are provided by residues tyrosine 100 and 107–110 (GADR). The active-site Proton acceptor is the aspartate 109. Position 129 (aspartate 129) interacts with K(+). An ATP-binding site is contributed by threonine 132. A substrate-binding site is contributed by threonine 184.

Belongs to the type III pantothenate kinase family. As to quaternary structure, homodimer. Requires NH4(+) as cofactor. K(+) serves as cofactor.

Its subcellular location is the cytoplasm. It catalyses the reaction (R)-pantothenate + ATP = (R)-4'-phosphopantothenate + ADP + H(+). It functions in the pathway cofactor biosynthesis; coenzyme A biosynthesis; CoA from (R)-pantothenate: step 1/5. Functionally, catalyzes the phosphorylation of pantothenate (Pan), the first step in CoA biosynthesis. The chain is Type III pantothenate kinase from Geobacter sp. (strain M21).